The primary structure comprises 61 residues: Sperm protamine P1 (61 aa).

The tract at residues 1-61 (MARYRHSRSR…RRYSRRRRRY (61 aa)) is disordered.

It belongs to the protamine P1 family. In terms of tissue distribution, testis.

The protein resides in the nucleus. It is found in the chromosome. Its function is as follows. Protamines substitute for histones in the chromatin of sperm during the haploid phase of spermatogenesis. They compact sperm DNA into a highly condensed, stable and inactive complex. This chain is Sperm protamine P1 (PRM1), found in Potorous longipes (Long-footed potoroo).